The primary structure comprises 430 residues: Enolase (430 aa).

Residue glutamine 165 coordinates (2R)-2-phosphoglycerate. Glutamate 207 functions as the Proton donor in the catalytic mechanism. Mg(2+)-binding residues include aspartate 244, glutamate 287, and aspartate 314. Lysine 339, arginine 368, serine 369, and lysine 390 together coordinate (2R)-2-phosphoglycerate. Lysine 339 (proton acceptor) is an active-site residue.

It belongs to the enolase family. In terms of assembly, component of the RNA degradosome, a multiprotein complex involved in RNA processing and mRNA degradation. Mg(2+) is required as a cofactor.

Its subcellular location is the cytoplasm. The protein localises to the secreted. It is found in the cell surface. It catalyses the reaction (2R)-2-phosphoglycerate = phosphoenolpyruvate + H2O. Its pathway is carbohydrate degradation; glycolysis; pyruvate from D-glyceraldehyde 3-phosphate: step 4/5. Catalyzes the reversible conversion of 2-phosphoglycerate (2-PG) into phosphoenolpyruvate (PEP). It is essential for the degradation of carbohydrates via glycolysis. The sequence is that of Enolase from Stenotrophomonas maltophilia (strain K279a).